A 128-amino-acid polypeptide reads, in one-letter code: Glycine cleavage system H protein (128 aa).

The Lipoyl-binding domain occupies 24–106; sequence VYSVGITEHA…YTDGWLFSIK (83 aa). Lys65 bears the N6-lipoyllysine mark.

Belongs to the GcvH family. The glycine cleavage system is composed of four proteins: P, T, L and H. (R)-lipoate serves as cofactor.

In terms of biological role, the glycine cleavage system catalyzes the degradation of glycine. The H protein shuttles the methylamine group of glycine from the P protein to the T protein. This Yersinia enterocolitica serotype O:8 / biotype 1B (strain NCTC 13174 / 8081) protein is Glycine cleavage system H protein.